The chain runs to 471 residues: Isochorismate synthase MenF (471 aa).

Residue K226 is the Proton acceptor of the active site. Catalysis depends on E275, which acts as the Proton donor. Mg(2+) is bound by residues E319 and E454.

Belongs to the isochorismate synthase family. The cofactor is Mg(2+).

The catalysed reaction is chorismate = isochorismate. It participates in quinol/quinone metabolism; 1,4-dihydroxy-2-naphthoate biosynthesis; 1,4-dihydroxy-2-naphthoate from chorismate: step 1/7. It functions in the pathway quinol/quinone metabolism; menaquinone biosynthesis. Catalyzes the conversion of chorismate to isochorismate. This is Isochorismate synthase MenF from Bacillus subtilis (strain 168).